An 88-amino-acid polypeptide reads, in one-letter code: Phosphocarrier protein HPr (88 aa).

The region spanning 1-88 is the HPr domain; sequence MASKEFHIVV…ETMTKEGLAE (88 aa). The active-site Pros-phosphohistidine intermediate is the His-15. Position 46 is a phosphoserine; by HPrK/P (Ser-46).

The protein belongs to the HPr family.

Its subcellular location is the cytoplasm. With respect to regulation, phosphorylation on Ser-46 inhibits the phosphoryl transfer from enzyme I to HPr. Functionally, general (non sugar-specific) component of the phosphoenolpyruvate-dependent sugar phosphotransferase system (sugar PTS). This major carbohydrate active-transport system catalyzes the phosphorylation of incoming sugar substrates concomitantly with their translocation across the cell membrane. The phosphoryl group from phosphoenolpyruvate (PEP) is transferred to the phosphoryl carrier protein HPr by enzyme I. Phospho-HPr then transfers it to the PTS EIIA domain. P-Ser-HPr interacts with the catabolite control protein A (CcpA), forming a complex that binds to DNA at the catabolite response elements cre, operator sites preceding a large number of catabolite-regulated genes. Thus, P-Ser-HPr is a corepressor in carbon catabolite repression (CCR), a mechanism that allows bacteria to coordinate and optimize the utilization of available carbon sources. P-Ser-HPr also plays a role in inducer exclusion, in which it probably interacts with several non-PTS permeases and inhibits their transport activity. This is Phosphocarrier protein HPr (ptsH) from Lactococcus lactis subsp. lactis (strain IL1403) (Streptococcus lactis).